Here is a 231-residue protein sequence, read N- to C-terminus: Response regulator MprA (231 aa).

In terms of domain architecture, Response regulatory spans 4–118 (RILVVDDDRA…ELLARMRALL (115 aa)). Asp-48 carries the post-translational modification 4-aspartylphosphate. A DNA-binding region (ompR/PhoB-type) is located at residues 130–228 (SAAMTFSDLS…VRGVGYVLRE (99 aa)).

In terms of processing, phosphorylated and dephosphorylated by MprB.

Its subcellular location is the cytoplasm. Its function is as follows. Member of the two-component regulatory system MprB/MprA which contributes to maintaining a balance among several systems involved in stress resistance and is required for establishment and maintenance of persistent infection in the host. Functions as a transcriptional regulator that recognizes a 19-bp nucleotide motif comprizing two loosely conserved 8-bp direct DNA-binding motif repeats separated by a 3-bp spacer region. This Mycolicibacterium vanbaalenii (strain DSM 7251 / JCM 13017 / BCRC 16820 / KCTC 9966 / NRRL B-24157 / PYR-1) (Mycobacterium vanbaalenii) protein is Response regulator MprA (mprA).